The sequence spans 591 residues: DEAD-box ATP-dependent RNA helicase 35 (591 aa).

Residues 146 to 174 (KNFKDMKFPRPVLDTLKEKGIVQPTPIQV) carry the Q motif motif. In terms of domain architecture, Helicase ATP-binding spans 177-361 (LPVILAGRDM…RSALVKPVTV (185 aa)). 190 to 197 (AFTGSGKT) contributes to the ATP binding site. Residues 309-312 (DEAD) carry the DEAD box motif. Residues 372–532 (DVIQEVEYVK…RIPPVLAELN (161 aa)) enclose the Helicase C-terminal domain. Residues 548 to 565 (KGCAYCGGLGHRIRDCPK) form a CCHC-type zinc finger.

This sequence belongs to the DEAD box helicase family. DDX41 subfamily.

The enzyme catalyses ATP + H2O = ADP + phosphate + H(+). The protein is DEAD-box ATP-dependent RNA helicase 35 (RH35) of Arabidopsis thaliana (Mouse-ear cress).